The following is a 485-amino-acid chain: BTB/POZ domain-containing protein YLR108C (485 aa).

Residues 26-121 (EVFKIRIGQK…LIKEYDYHFT (96 aa)) form the BTB domain.

Its subcellular location is the nucleus. In Saccharomyces cerevisiae (strain ATCC 204508 / S288c) (Baker's yeast), this protein is BTB/POZ domain-containing protein YLR108C.